The following is a 96-amino-acid chain: Small ribosomal subunit protein bS6 (96 aa).

This sequence belongs to the bacterial ribosomal protein bS6 family.

In terms of biological role, binds together with bS18 to 16S ribosomal RNA. This Streptococcus equi subsp. zooepidemicus (strain MGCS10565) protein is Small ribosomal subunit protein bS6.